Consider the following 63-residue polypeptide: Toxin Cn11 (63 aa).

An LCN-type CS-alpha/beta domain is found at 2-63 (RDGYPVDEKG…KVWTYETNTC (62 aa)). Intrachain disulfides connect cysteine 12–cysteine 63, cysteine 16–cysteine 37, cysteine 23–cysteine 44, and cysteine 27–cysteine 46.

The protein belongs to the long (4 C-C) scorpion toxin superfamily. Sodium channel inhibitor family. Expressed by the venom gland.

It is found in the secreted. In terms of biological role, first blocker of sodium channels (Nav) found in scorpions. Is lethal to crustaceans (Cambarellus montezumae), less toxic to insects (crickets) and non-toxic to mammals (mice) at the doses assayed. The sequence is that of Toxin Cn11 from Centruroides noxius (Mexican scorpion).